The chain runs to 371 residues: tRNA (guanine(26)-N(2))-dimethyltransferase (371 aa).

The 365-residue stretch at 4–368 (IEVTEGRTTF…APLDAIAAAL (365 aa)) folds into the Trm1 methyltransferase domain. S-adenosyl-L-methionine is bound by residues R41, R66, D82, D108, and A109. Zn(2+) contacts are provided by C237, C240, C256, and C259.

The protein belongs to the class I-like SAM-binding methyltransferase superfamily. Trm1 family.

The enzyme catalyses guanosine(26) in tRNA + 2 S-adenosyl-L-methionine = N(2)-dimethylguanosine(26) in tRNA + 2 S-adenosyl-L-homocysteine + 2 H(+). In terms of biological role, dimethylates a single guanine residue at position 26 of a number of tRNAs using S-adenosyl-L-methionine as donor of the methyl groups. In Methanosphaerula palustris (strain ATCC BAA-1556 / DSM 19958 / E1-9c), this protein is tRNA (guanine(26)-N(2))-dimethyltransferase.